The primary structure comprises 139 residues: TDP-4-oxo-6-deoxy-alpha-D-glucose-3,4-oxoisomerase (139 aa).

H49 (proton acceptor) is an active-site residue.

In terms of assembly, homodimer.

The catalysed reaction is dTDP-4-dehydro-6-deoxy-alpha-D-glucose = dTDP-3-dehydro-6-deoxy-alpha-D-galactose. Mediates the isomerization of dTDP-6-deoxy-D-xylohex-4-ulose into dTDP-6-deoxy-D-xylohex-3-ulose in the biosynthesis of dTDP-3-acetamido-3,6-dideoxy-alpha-D-galactose, a glycan chain of the S-layer. In Aneurinibacillus thermoaerophilus, this protein is TDP-4-oxo-6-deoxy-alpha-D-glucose-3,4-oxoisomerase (fdtA).